A 63-amino-acid polypeptide reads, in one-letter code: Large ribosomal subunit protein uL30 (63 aa).

The protein belongs to the universal ribosomal protein uL30 family. As to quaternary structure, part of the 50S ribosomal subunit.

The sequence is that of Large ribosomal subunit protein uL30 from Bradyrhizobium sp. (strain BTAi1 / ATCC BAA-1182).